The chain runs to 2233 residues: Acetyl-CoA carboxylase (2233 aa).

Position 2 is an N-acetylserine (S2). S2 is subject to Phosphoserine. The Biotin carboxylation domain occupies 58–567 (VISKILIANN…TTGWLDDLIT (510 aa)). An ATP-grasp domain is found at 216-408 (KTGLVSVDDD…LPAAQLQIAM (193 aa)). ATP is bound at residue 256-261 (GGGGKG). Residues E365, E379, and N381 each coordinate Mn(2+). R383 is an active-site residue. The 75-residue stretch at 694–768 (LEVENDPTQL…VAGDIMAIMT (75 aa)) folds into the Biotinyl-binding domain. K735 is subject to N6-biotinyllysine. Residues S790, S1148, S1157, and S1162 each carry the phosphoserine modification. One can recognise a CoA carboxyltransferase N-terminal domain in the interval 1486–1822 (PYPVKEWLQP…KRNMPVPILE (337 aa)). The carboxyltransferase stretch occupies residues 1486 to 2141 (PYPVKEWLQP…EEYLIKRLSH (656 aa)). Residue 1627–1629 (ARI) coordinates acetyl-CoA. R1731 contributes to the CoA binding site. One can recognise a CoA carboxyltransferase C-terminal domain in the interval 1826–2141 (TWDRPVDFTP…EEYLIKRLSH (316 aa)). Residue G1998 participates in acetyl-CoA binding. CoA contacts are provided by K2034 and R2036.

As to quaternary structure, homodimer. The cofactor is biotin. Mn(2+) serves as cofactor.

It is found in the cytoplasm. The protein resides in the endoplasmic reticulum membrane. The catalysed reaction is hydrogencarbonate + acetyl-CoA + ATP = malonyl-CoA + ADP + phosphate + H(+). It catalyses the reaction N(6)-biotinyl-L-lysyl-[protein] + hydrogencarbonate + ATP = N(6)-carboxybiotinyl-L-lysyl-[protein] + ADP + phosphate + H(+). The protein operates within lipid metabolism; malonyl-CoA biosynthesis; malonyl-CoA from acetyl-CoA: step 1/1. Its activity is regulated as follows. By phosphorylation. The catalytic activity is inhibited by soraphen A, a polyketide isolated from the myxobacterium Sorangium cellulosum and a potent inhibitor of fungal growth. Functionally, carries out three functions: biotin carboxyl carrier protein, biotin carboxylase and carboxyltransferase. Involved in the synthesis of very-long-chain fatty acid synthesis which is required to maintain a functional nuclear envelope. Required for acylation and vacuolar membrane association of VAC8 which is necessary to maintain a normal morphology of the vacuole. The polypeptide is Acetyl-CoA carboxylase (ACC1) (Saccharomyces cerevisiae (strain ATCC 204508 / S288c) (Baker's yeast)).